A 368-amino-acid chain; its full sequence is 1-deoxy-D-xylulose 5-phosphate reductoisomerase (368 aa).

NADPH is bound by residues T10, G11, S12, I13, Q38, and N100. 1-deoxy-D-xylulose 5-phosphate is bound at residue K101. E102 contacts NADPH. Position 125 (D125) interacts with Mn(2+). The 1-deoxy-D-xylulose 5-phosphate site is built by S126, E127, S151, and H172. E127 contributes to the Mn(2+) binding site. Residue G178 coordinates NADPH. Positions 185, 190, 191, and 194 each coordinate 1-deoxy-D-xylulose 5-phosphate. A Mn(2+)-binding site is contributed by E194.

The protein belongs to the DXR family. Requires Mg(2+) as cofactor. The cofactor is Mn(2+).

It catalyses the reaction 2-C-methyl-D-erythritol 4-phosphate + NADP(+) = 1-deoxy-D-xylulose 5-phosphate + NADPH + H(+). It participates in isoprenoid biosynthesis; isopentenyl diphosphate biosynthesis via DXP pathway; isopentenyl diphosphate from 1-deoxy-D-xylulose 5-phosphate: step 1/6. In terms of biological role, catalyzes the NADPH-dependent rearrangement and reduction of 1-deoxy-D-xylulose-5-phosphate (DXP) to 2-C-methyl-D-erythritol 4-phosphate (MEP). The protein is 1-deoxy-D-xylulose 5-phosphate reductoisomerase of Tropheryma whipplei (strain TW08/27) (Whipple's bacillus).